Consider the following 729-residue polypeptide: Fatty acid oxidation complex subunit alpha (729 aa).

An enoyl-CoA hydratase/isomerase region spans residues 1-189 (MLYKGDTLYL…KIGLVDGVVK (189 aa)). Substrate is bound at residue aspartate 296. Residues 311 to 729 (ETPKQAAVLG…ARPVGSLKTA (419 aa)) are 3-hydroxyacyl-CoA dehydrogenase. NAD(+) is bound by residues methionine 324, aspartate 343, 400-402 (VVE), lysine 407, and serine 429. Residue histidine 450 is the For 3-hydroxyacyl-CoA dehydrogenase activity of the active site. Position 453 (asparagine 453) interacts with NAD(+). Asparagine 500 and tyrosine 660 together coordinate substrate. A disordered region spans residues 708 to 729 (RHNEPYYPPVEPARPVGSLKTA).

This sequence in the N-terminal section; belongs to the enoyl-CoA hydratase/isomerase family. It in the C-terminal section; belongs to the 3-hydroxyacyl-CoA dehydrogenase family. As to quaternary structure, heterotetramer of two alpha chains (FadB) and two beta chains (FadA).

It catalyses the reaction a (3S)-3-hydroxyacyl-CoA + NAD(+) = a 3-oxoacyl-CoA + NADH + H(+). The enzyme catalyses a (3S)-3-hydroxyacyl-CoA = a (2E)-enoyl-CoA + H2O. The catalysed reaction is a 4-saturated-(3S)-3-hydroxyacyl-CoA = a (3E)-enoyl-CoA + H2O. It carries out the reaction (3S)-3-hydroxybutanoyl-CoA = (3R)-3-hydroxybutanoyl-CoA. It catalyses the reaction a (3Z)-enoyl-CoA = a 4-saturated (2E)-enoyl-CoA. The enzyme catalyses a (3E)-enoyl-CoA = a 4-saturated (2E)-enoyl-CoA. The protein operates within lipid metabolism; fatty acid beta-oxidation. Involved in the aerobic and anaerobic degradation of long-chain fatty acids via beta-oxidation cycle. Catalyzes the formation of 3-oxoacyl-CoA from enoyl-CoA via L-3-hydroxyacyl-CoA. It can also use D-3-hydroxyacyl-CoA and cis-3-enoyl-CoA as substrate. The sequence is that of Fatty acid oxidation complex subunit alpha from Salmonella gallinarum (strain 287/91 / NCTC 13346).